Here is a 105-residue protein sequence, read N- to C-terminus: Small ribosomal subunit protein uS10 (105 aa).

The protein belongs to the universal ribosomal protein uS10 family. In terms of assembly, part of the 30S ribosomal subunit.

Functionally, involved in the binding of tRNA to the ribosomes. In Rickettsia bellii (strain OSU 85-389), this protein is Small ribosomal subunit protein uS10.